The chain runs to 513 residues: ATP synthase subunit alpha (513 aa).

169 to 176 provides a ligand contact to ATP; that stretch reads GDRQCGKT.

The protein belongs to the ATPase alpha/beta chains family. In terms of assembly, F-type ATPases have 2 components, CF(1) - the catalytic core - and CF(0) - the membrane proton channel. CF(1) has five subunits: alpha(3), beta(3), gamma(1), delta(1), epsilon(1). CF(0) has three main subunits: a(1), b(2) and c(9-12). The alpha and beta chains form an alternating ring which encloses part of the gamma chain. CF(1) is attached to CF(0) by a central stalk formed by the gamma and epsilon chains, while a peripheral stalk is formed by the delta and b chains.

It localises to the cell inner membrane. It catalyses the reaction ATP + H2O + 4 H(+)(in) = ADP + phosphate + 5 H(+)(out). Its function is as follows. Produces ATP from ADP in the presence of a proton gradient across the membrane. The alpha chain is a regulatory subunit. The sequence is that of ATP synthase subunit alpha from Burkholderia vietnamiensis (strain G4 / LMG 22486) (Burkholderia cepacia (strain R1808)).